The primary structure comprises 506 residues: MVSIRPDEISAILKQQIEDYDKSVSVTNVGTVLQVGDGIARVYGLQQVMAGELVEFEDGTEGIALNLEDDNVGIVLMGEGLGIQEGSTVRATGKIASVPVGDAMLGRVVNPLGVAIDGKGDLATTESRLIESPAPGIIQRKSVHEPMQTGITAIDAMIPIGRGQRELIIGDRQTGKTAICIDTILNQADQDVVCVYVAIGQKAASVAQVTEVLRERGALDYTVVVAANASEPAALQYLAPYTGASIAEYFMYKGKATLVIYDDLTKQAQAYRQMSLLLRRPPGREAYPGDVFYCHSRLLERAAKLSDAMGKGSMTALPIIETQAGDVSAYIPTNVISITDGQVFLSSDLFNSGLRPAINVGISVSRVGGAAQTKAIKKIAGTLKLELAQFDELAAFSQFASDLDAATQQQLSRGKRLRELLKQPQFSPLILAEQVAIVYAGVKGLIDDVPVEEVVQFSRELREYLKSNKPEFISKIQTEKVLSPEAETTLKEAIAEVVSTMLASAN.

Position 170 to 177 (170 to 177 (GDRQTGKT)) interacts with ATP.

The protein belongs to the ATPase alpha/beta chains family. F-type ATPases have 2 components, CF(1) - the catalytic core - and CF(0) - the membrane proton channel. CF(1) has five subunits: alpha(3), beta(3), gamma(1), delta(1), epsilon(1). CF(0) has four main subunits: a(1), b(1), b'(1) and c(9-12).

The protein localises to the cellular thylakoid membrane. It carries out the reaction ATP + H2O + 4 H(+)(in) = ADP + phosphate + 5 H(+)(out). Functionally, produces ATP from ADP in the presence of a proton gradient across the membrane. The alpha chain is a regulatory subunit. The sequence is that of ATP synthase subunit alpha from Synechococcus sp. (strain CC9311).